A 415-amino-acid polypeptide reads, in one-letter code: Citrate (Re)-synthase (415 aa).

A Pyruvate carboxyltransferase domain is found at 4-275 (IFIIDVTNRD…GHEVDLSKAW (272 aa)).

Belongs to the alpha-IPM synthase/homocitrate synthase family. Mn(2+) serves as cofactor.

It carries out the reaction oxaloacetate + acetyl-CoA + H2O = citrate + CoA + H(+). With respect to regulation, inhibited by citrate and under aerobic conditions. In terms of biological role, catalyzes the condensation of the acetyl group of acetyl coenzyme A (acetyl-CoA) with oxaloacetate to form citrate. This enzyme is highly Re-face stereospecific with respect to the C-2 of oxaloacetate. This Dehalococcoides mccartyi (strain CBDB1) protein is Citrate (Re)-synthase.